Reading from the N-terminus, the 539-residue chain is Glucose-6-phosphate isomerase (539 aa).

The Proton donor role is filled by Glu353. Active-site residues include His384 and Lys505.

Belongs to the GPI family.

Its subcellular location is the cytoplasm. The enzyme catalyses alpha-D-glucose 6-phosphate = beta-D-fructose 6-phosphate. The protein operates within carbohydrate biosynthesis; gluconeogenesis. It functions in the pathway carbohydrate degradation; glycolysis; D-glyceraldehyde 3-phosphate and glycerone phosphate from D-glucose: step 2/4. Its function is as follows. Catalyzes the reversible isomerization of glucose-6-phosphate to fructose-6-phosphate. This Ralstonia pickettii (strain 12J) protein is Glucose-6-phosphate isomerase.